The sequence spans 178 residues: ATP synthase subunit delta (178 aa).

The protein belongs to the ATPase delta chain family. F-type ATPases have 2 components, F(1) - the catalytic core - and F(0) - the membrane proton channel. F(1) has five subunits: alpha(3), beta(3), gamma(1), delta(1), epsilon(1). F(0) has three main subunits: a(1), b(2) and c(10-14). The alpha and beta chains form an alternating ring which encloses part of the gamma chain. F(1) is attached to F(0) by a central stalk formed by the gamma and epsilon chains, while a peripheral stalk is formed by the delta and b chains.

It is found in the cell membrane. F(1)F(0) ATP synthase produces ATP from ADP in the presence of a proton or sodium gradient. F-type ATPases consist of two structural domains, F(1) containing the extramembraneous catalytic core and F(0) containing the membrane proton channel, linked together by a central stalk and a peripheral stalk. During catalysis, ATP synthesis in the catalytic domain of F(1) is coupled via a rotary mechanism of the central stalk subunits to proton translocation. Functionally, this protein is part of the stalk that links CF(0) to CF(1). It either transmits conformational changes from CF(0) to CF(1) or is implicated in proton conduction. This chain is ATP synthase subunit delta, found in Streptococcus equi subsp. zooepidemicus (strain MGCS10565).